A 148-amino-acid polypeptide reads, in one-letter code: uncharacterized protein (148 aa).

One can recognise an HTH asnC-type domain in the interval 4–65; sequence MDKVDLQLIK…IPNLEKLNYM (62 aa). The segment at residues 23–42 is a DNA-binding region (H-T-H motif); that stretch reads YRELAEMLGTTRQRVARKVD.

This is an uncharacterized protein from Pyrococcus furiosus (strain ATCC 43587 / DSM 3638 / JCM 8422 / Vc1).